The sequence spans 263 residues: Small ribosomal subunit protein eS4 (263 aa).

The S4 RNA-binding domain maps to 42–104 (LPLIVFLRNR…TGEHFRLVYD (63 aa)).

It belongs to the eukaryotic ribosomal protein eS4 family.

This is Small ribosomal subunit protein eS4 (RPS4Y1) from Pan paniscus (Pygmy chimpanzee).